The chain runs to 421 residues: Extracellular signal-regulated kinase 1 (421 aa).

The Protein kinase domain maps to 70 to 375; it reads YQILEIVGEG…VEDALKHPYL (306 aa). ATP contacts are provided by residues 76–84 and lysine 99; that span reads VGEGAYGIV. Aspartate 194 acts as the Proton acceptor in catalysis. Threonine 230 carries the phosphothreonine modification. A TXY motif is present at residues 230–232; sequence TEY. Tyrosine 232 bears the Phosphotyrosine mark.

The protein belongs to the protein kinase superfamily. CMGC Ser/Thr protein kinase family. MAP kinase subfamily. Mg(2+) serves as cofactor. Post-translationally, dually phosphorylated on Thr-230 and Tyr-232, which activates the enzyme.

It carries out the reaction L-seryl-[protein] + ATP = O-phospho-L-seryl-[protein] + ADP + H(+). It catalyses the reaction L-threonyl-[protein] + ATP = O-phospho-L-threonyl-[protein] + ADP + H(+). With respect to regulation, activated by tyrosine and threonine phosphorylation. The sequence is that of Extracellular signal-regulated kinase 1 (CEK1) from Candida albicans (strain SC5314 / ATCC MYA-2876) (Yeast).